The sequence spans 218 residues: Outer-membrane lipoprotein LolB (218 aa).

The first 24 residues, 1 to 24 (MNNLSYLTKIPLIWVLLSVTLLSA), serve as a signal peptide directing secretion. Cys25 carries the N-palmitoyl cysteine lipid modification. The S-diacylglycerol cysteine moiety is linked to residue Cys25.

Belongs to the LolB family. In terms of assembly, monomer.

It is found in the cell outer membrane. In terms of biological role, plays a critical role in the incorporation of lipoproteins in the outer membrane after they are released by the LolA protein. The chain is Outer-membrane lipoprotein LolB from Shewanella sediminis (strain HAW-EB3).